The primary structure comprises 3061 residues: Genome polyprotein (3061 aa).

Positions 141–284 (KLTEGQMNHL…QGVMDSMVQF (144 aa)) constitute a Peptidase S30 domain. Active-site for P1 proteinase activity residues include His192, Asp201, and Ser235. An Involved in interaction with stylet and aphid transmission motif is present at residues 334–337 (KITC). The short motif at 592–594 (PTK) is the Involved in virions binding and aphid transmission element. Residues 618–740 (LYIARQGFCY…ESDIKHYRVG (123 aa)) enclose the Peptidase C6 domain. Active-site for helper component proteinase activity residues include Cys626 and His699. A Helicase ATP-binding domain is found at 1229–1381 (DIAHSEHLDF…TQQPVKLIVE (153 aa)). 1242–1249 (GAVGSGKS) contributes to the ATP binding site. Positions 1331 to 1334 (DECH) match the DECH box motif. Residues 1400-1559 (DVVQFGSNVL…NLPVMTGGVS (160 aa)) enclose the Helicase C-terminal domain. The Nuclear localization signal signature appears at 1884-1892 (RKKGKGKGT). Position 1907 is an O-(5'-phospho-RNA)-tyrosine (Tyr1907). The Peptidase C4 domain maps to 2032 to 2250 (AKSLMRGLRD…VLWGPLKLKE (219 aa)). Residues His2077, Asp2112, and Cys2182 each act as for nuclear inclusion protein A activity in the active site. The RdRp catalytic domain occupies 2517–2641 (WVYCDADGSQ…AVNPEKESIL (125 aa)). The interval 2795–2835 (GNDTIDAGGSTKKDAKQEQGSIQPNLNKEKEKDVNVGTSGT) is disordered. Phosphothreonine is present on Thr3044.

The protein belongs to the potyviridae genome polyprotein family. Interacts with host eIF4E protein (via cap-binding region); this interaction mediates the translation of the VPg-viral RNA conjugates. Part of a complex that comprises VPg, RNA, host EIF4E and EIF4G; this interaction mediates the translation of the VPg-viral RNA conjugates. In terms of processing, VPg is uridylylated by the polymerase and is covalently attached to the 5'-end of the genomic RNA. This uridylylated form acts as a nucleotide-peptide primer for the polymerase. Post-translationally, potyviral RNA is expressed as two polyproteins which undergo post-translational proteolytic processing. Genome polyprotein is processed by NIa-pro, P1 and HC-pro proteinases resulting in the production of at least ten individual proteins. P3N-PIPO polyprotein is cleaved by P1 and HC-pro proteinases resulting in the production of three individual proteins. The P1 proteinase and the HC-pro cleave only their respective C-termini autocatalytically. 6K1 is essential for proper proteolytic separation of P3 from CI.

The protein localises to the host cytoplasmic vesicle. The protein resides in the host nucleus. Its subcellular location is the virion. The catalysed reaction is RNA(n) + a ribonucleoside 5'-triphosphate = RNA(n+1) + diphosphate. The enzyme catalyses Hydrolyzes glutaminyl bonds, and activity is further restricted by preferences for the amino acids in P6 - P1' that vary with the species of potyvirus, e.g. Glu-Xaa-Xaa-Tyr-Xaa-Gln-|-(Ser or Gly) for the enzyme from tobacco etch virus. The natural substrate is the viral polyprotein, but other proteins and oligopeptides containing the appropriate consensus sequence are also cleaved.. It catalyses the reaction Hydrolyzes a Gly-|-Gly bond at its own C-terminus, commonly in the sequence -Tyr-Xaa-Val-Gly-|-Gly, in the processing of the potyviral polyprotein.. In terms of biological role, required for aphid transmission and also has proteolytic activity. Only cleaves a Gly-Gly dipeptide at its own C-terminus. Interacts with virions and aphid stylets. Acts as a suppressor of RNA-mediated gene silencing, also known as post-transcriptional gene silencing (PTGS), a mechanism of plant viral defense that limits the accumulation of viral RNAs. May have RNA-binding activity. Functionally, has helicase activity. It may be involved in replication. Its function is as follows. Indispensable for virus replication. Reduces the abundance of host transcripts related to jasmonic acid biosynthesis therefore altering the host defenses. In order to increase its own stability, decreases host protein degradation pathways. Indispensable for virus replication. In terms of biological role, mediates the cap-independent, EIF4E-dependent translation of viral genomic RNAs. Binds to the cap-binding site of host EIF4E and thus interferes with the host EIF4E-dependent mRNA export and translation. VPg-RNA directly binds EIF4E and is a template for transcription. Also forms trimeric complexes with EIF4E-EIF4G, which are templates for translation. Functionally, has RNA-binding and proteolytic activities. Its function is as follows. An RNA-dependent RNA polymerase that plays an essential role in the virus replication. Involved in aphid transmission, cell-to-cell and systemis movement, encapsidation of the viral RNA and in the regulation of viral RNA amplification. This is Genome polyprotein from Potato virus Y (strain Hungarian) (PVY).